The following is a 182-amino-acid chain: UPF0316 protein lp_1140 (182 aa).

3 helical membrane passes run 1-21, 36-56, and 62-82; these read MHIDMGMLVLIFIINFAYITL, FAAFASVIEITIYVLGLSLVL, and PINLVVYALGYGVGVYVGMVI.

Belongs to the UPF0316 family.

Its subcellular location is the cell membrane. This is UPF0316 protein lp_1140 from Lactiplantibacillus plantarum (strain ATCC BAA-793 / NCIMB 8826 / WCFS1) (Lactobacillus plantarum).